We begin with the raw amino-acid sequence, 210 residues long: Holliday junction resolvase RecU (210 aa).

Positions 93, 95, 108, and 127 each coordinate Mg(2+).

Belongs to the RecU family. Requires Mg(2+) as cofactor.

The protein localises to the cytoplasm. The enzyme catalyses Endonucleolytic cleavage at a junction such as a reciprocal single-stranded crossover between two homologous DNA duplexes (Holliday junction).. Functionally, endonuclease that resolves Holliday junction intermediates in genetic recombination. Cleaves mobile four-strand junctions by introducing symmetrical nicks in paired strands. Promotes annealing of linear ssDNA with homologous dsDNA. Required for DNA repair, homologous recombination and chromosome segregation. The polypeptide is Holliday junction resolvase RecU (Lactobacillus helveticus (strain DPC 4571)).